Reading from the N-terminus, the 584-residue chain is uncharacterized protein (584 aa).

Disordered stretches follow at residues 123-156 (LSCSSSSPSSSSSSSSSSPRLISTPPIISTPSSP), 209-264 (KIVT…INGG), and 355-479 (STQL…ITPT). 2 stretches are compositionally biased toward low complexity: residues 237–260 (SLSFKSPCSSPSSSSSSTTTPKSS) and 366–376 (SISAATTTTIT). Composition is skewed to polar residues over residues 377–388 (PHNNNSTMTTKT) and 395–419 (DTSNLSTPKSTSSTINKAFTTSTTP). Low complexity predominate over residues 425-479 (MSMTPLSSSSSSSTTPSKFINPLPSSSSKTTTTITNSKRLSTLSKPSPITPITPT).

This is an uncharacterized protein from Dictyostelium discoideum (Social amoeba).